The primary structure comprises 287 residues: DDRGK domain-containing protein 1 (287 aa).

At 1-5 (MDLIL) the chain is on the lumenal side. The helical transmembrane segment at 6-26 (LLGIAVALLVILVTLFFFTKG) threads the bilayer. At 27 to 287 (KGSQESGKYN…LINLVPVSAE (261 aa)) the chain is on the cytoplasmic side. Disordered stretches follow at residues 28-102 (GSQE…KRAK) and 135-164 (KVEA…RQEH). Residues 44–68 (AQAAPRRAQVVRNQRNRARVAAAPA) are compositionally biased toward low complexity. Positions 85–102 (IPHADFNGEKMGAKKRAK) are enriched in basic and acidic residues.

Belongs to the DDRGK1 family. As to quaternary structure, interacts with Atg9; the interaction is transient.

The protein localises to the endoplasmic reticulum membrane. In terms of biological role, substrate adapter for ufmylation, the covalent attachment of the ubiquitin-like modifier UFM1 to substrate proteins. Required for ufmylation of Atg9; protects the nervous system during aging, possibly by stabilizing Atg9 and supporting its function. This is DDRGK domain-containing protein 1 from Culex quinquefasciatus (Southern house mosquito).